A 416-amino-acid chain; its full sequence is Gamma-glutamyl phosphate reductase (416 aa).

It belongs to the gamma-glutamyl phosphate reductase family.

It is found in the cytoplasm. It carries out the reaction L-glutamate 5-semialdehyde + phosphate + NADP(+) = L-glutamyl 5-phosphate + NADPH + H(+). It participates in amino-acid biosynthesis; L-proline biosynthesis; L-glutamate 5-semialdehyde from L-glutamate: step 2/2. Functionally, catalyzes the NADPH-dependent reduction of L-glutamate 5-phosphate into L-glutamate 5-semialdehyde and phosphate. The product spontaneously undergoes cyclization to form 1-pyrroline-5-carboxylate. The polypeptide is Gamma-glutamyl phosphate reductase (Vibrio parahaemolyticus serotype O3:K6 (strain RIMD 2210633)).